Consider the following 421-residue polypeptide: CinA-like protein (421 aa).

The protein belongs to the CinA family.

This chain is CinA-like protein, found in Myxococcus xanthus (strain DK1622).